We begin with the raw amino-acid sequence, 97 residues long: MRISATLLCLLLIAAAFSIQVWAQPDGPNASTCCYVKKQKIPKRNLKSYRRITSSRCPWEAVIFKTKKGMEVCAEAHQKWVEEAIAYLDMKTPTPKP.

The N-terminal stretch at 1 to 23 is a signal peptide; that stretch reads MRISATLLCLLLIAAAFSIQVWA. A Pyrrolidone carboxylic acid modification is found at glutamine 24. N-linked (GlcNAc...) asparagine glycosylation is present at asparagine 29. Cystine bridges form between cysteine 33/cysteine 57 and cysteine 34/cysteine 73.

Belongs to the intercrine beta (chemokine CC) family. In terms of assembly, monomer. Interacts with TNFAIP6 (via Link domain).

It is found in the secreted. Its function is as follows. Chemotactic factor that attracts monocytes and eosinophils, but not neutrophils. Augments monocyte anti-tumor activity. The sequence is that of C-C motif chemokine 7 (Ccl7) from Mus musculus (Mouse).